Here is a 288-residue protein sequence, read N- to C-terminus: 33 kDa chaperonin (288 aa).

2 cysteine pairs are disulfide-bonded: C225–C227 and C258–C261.

It belongs to the HSP33 family. Post-translationally, under oxidizing conditions two disulfide bonds are formed involving the reactive cysteines. Under reducing conditions zinc is bound to the reactive cysteines and the protein is inactive.

It is found in the cytoplasm. Redox regulated molecular chaperone. Protects both thermally unfolding and oxidatively damaged proteins from irreversible aggregation. Plays an important role in the bacterial defense system toward oxidative stress. This chain is 33 kDa chaperonin, found in Shewanella denitrificans (strain OS217 / ATCC BAA-1090 / DSM 15013).